A 620-amino-acid chain; its full sequence is Pentatricopeptide repeat-containing protein At5g66520 (620 aa).

10 PPR repeats span residues 79–113 (DTFL…SAPH), 114–148 (NAYT…GYEN), 149–179 (DVYA…IPEP), 180–210 (DDVS…MAEK), 211–245 (NAIS…DVEP), 246–280 (DNVS…RIRM), 281–311 (DSVL…IKKK), 312–346 (SVQA…GIKP), 347–382 (NVIT…NLKP), and 383–413 (TIEH…MPLK). Residues 418-493 (IWGALLKACR…VPGCSTISLE (76 aa)) are type E motif. Positions 494-524 (GTTHEFLAGDRSHPEIEKIQSKWRIMRRKLE) are type E(+) motif. A type DYW motif region spans residues 525 to 620 (ENGYVPELEE…DGKCSCGDYW (96 aa)).

Belongs to the PPR family. PCMP-H subfamily.

The sequence is that of Pentatricopeptide repeat-containing protein At5g66520 (PCMP-H61) from Arabidopsis thaliana (Mouse-ear cress).